We begin with the raw amino-acid sequence, 683 residues long: Glycine--tRNA ligase beta subunit (683 aa).

It belongs to the class-II aminoacyl-tRNA synthetase family. In terms of assembly, tetramer of two alpha and two beta subunits.

It is found in the cytoplasm. The catalysed reaction is tRNA(Gly) + glycine + ATP = glycyl-tRNA(Gly) + AMP + diphosphate. This is Glycine--tRNA ligase beta subunit from Pseudomonas putida (strain GB-1).